Consider the following 302-residue polypeptide: Protoheme IX farnesyltransferase 1 (302 aa).

Helical transmembrane passes span 30–50 (VVALMLLTVLVGMCLALPGAV), 52–72 (LQPLIFGLLGIGMMAGAAAAF), 102–122 (ALTFSISLAVLGFVLLYTLVN), 124–144 (LTAWLTFASLLGYAVVYTAYL), 152–172 (IVVGGLAGAMPPLLGWTSVTG), 178–198 (ALLLVIIIFAWTPPHFWALAI), 224–244 (CILLYTILLAIACLLPVLVGM), 245–265 (CGPLYLVGSTLLSCGFIYKSW), and 282–302 (FSIYHLMLLFIVLLVDHYLWV).

It belongs to the UbiA prenyltransferase family. Protoheme IX farnesyltransferase subfamily.

Its subcellular location is the cell inner membrane. The enzyme catalyses heme b + (2E,6E)-farnesyl diphosphate + H2O = Fe(II)-heme o + diphosphate. It functions in the pathway porphyrin-containing compound metabolism; heme O biosynthesis; heme O from protoheme: step 1/1. Functionally, converts heme B (protoheme IX) to heme O by substitution of the vinyl group on carbon 2 of heme B porphyrin ring with a hydroxyethyl farnesyl side group. The sequence is that of Protoheme IX farnesyltransferase 1 from Shewanella woodyi (strain ATCC 51908 / MS32).